The following is a 139-amino-acid chain: Holo-[acyl-carrier-protein] synthase (139 aa).

Residues Asp8 and Glu57 each coordinate Mg(2+).

It belongs to the P-Pant transferase superfamily. AcpS family. Mg(2+) is required as a cofactor.

It is found in the cytoplasm. The enzyme catalyses apo-[ACP] + CoA = holo-[ACP] + adenosine 3',5'-bisphosphate + H(+). Functionally, transfers the 4'-phosphopantetheine moiety from coenzyme A to a Ser of acyl-carrier-protein. The sequence is that of Holo-[acyl-carrier-protein] synthase from Sinorhizobium fredii (strain NBRC 101917 / NGR234).